A 319-amino-acid chain; its full sequence is CCAAT/enhancer-binding protein homolog 1 (319 aa).

Residues 53-67 (SLTIAASLQQRDRER) are n' domain; required for axon regeneration. The tract at residues 163–319 (TRRAVKRPVP…QRHILENFNK (157 aa)) is disordered. The span at 171–181 (VPYDDYQKEYS) shows a compositional bias: basic and acidic residues. The span at 182-198 (EESSDMTDNDGSVDDSY) shows a compositional bias: acidic residues. Basic and acidic residues-rich tracts occupy residues 225-248 (LKADEEKAEPTYKLKRARNNDAVR), 255-274 (KELQDKKEAEHDKMKRRIAE), 281-291 (SERDARRRDQD), and 302-319 (PMKEQRMPQRHILENFNK). Positions 233–308 (EPTYKLKRAR…NKGPMKEQRM (76 aa)) constitute a bZIP domain. The basic motif stretch occupies residues 237–271 (KLKRARNNDAVRKSRKKAKELQDKKEAEHDKMKRR). The interval 275 to 308 (LEGLLQSERDARRRDQDTLEQLLRNKGPMKEQRM) is leucine-zipper.

It belongs to the bZIP family. C/EBP subfamily. May interact with transcription factor ets-4. May interact (via N-terminus) with nipi-3. May interact (via N-terminus) with importin subunit alpha ima-3. Expressed in touch and motor neurons.

The protein resides in the synapse. The protein localises to the cytoplasm. It is found in the nucleus. Its subcellular location is the cell projection. It localises to the axon. Its function is as follows. Transcription factor. Binds to promoter regions of target genes, perhaps at the motif 5'-[AGCT]TT[AGT][TC]GAAA[ACT]-3'. Modulates expression of genes involved in development and in stress responses, including those regulating the p38/MAPK signaling pathways such as MAPKK sek-1 and phosphatase vhp-1. Involved in innate immunity. Plays a role in repressing the response to infection by the Gram-negative bacterium P.aeruginosa, perhaps acting independently of the pmk-1 or pmk-3 p38/MAPK pathways. However, also plays a protective role in the response to infection by P.aeruginosa. Required in axonal regrowth following injury and synaptogenesis. Following axon injury, in concert with transcription factor ets-4, activates expression of receptor tyrosine kinase svh-2. May function downstream of the Ca2+-activated p38/MAPK pathway to promote axon regeneration. Plays a role in modulating polymerization of neuronal microtubules. Involved in modulating lipid homeostasis. The protein is CCAAT/enhancer-binding protein homolog 1 of Caenorhabditis elegans.